A 186-amino-acid chain; its full sequence is ADP-ribosylation factor-like protein 8 (186 aa).

The segment at residues 1-19 (MLALINRILEWFKSIFWKE) is an intramembrane region (note=Mediates targeting to membranes). Residues 29 to 35 (QFSGKTT), 71 to 75 (DIGGQ), and 130 to 133 (NKRD) each bind GTP.

The protein belongs to the small GTPase superfamily. Arf family. As to quaternary structure, interacts with tubulin. Interacts (in GTP-bound form) with Rilpl. Interacts with unc-104. As to expression, expressed throughout development, from embryo to adult stage, in different tissues such as larval motor neurons, salivary glands, testis and ovaries (at protein level).

The protein localises to the lysosome membrane. The protein resides in the synapse. It is found in the cell projection. It localises to the axon. Its subcellular location is the perikaryon. Functionally, required for normal functioning of the late endocytic pathway including lysosome motility and late endosome-lysosome fusion. Not required for the delivery of lysosomal membrane protein-containing vesicles to late endosomes. In larval motor neurons, mediates the anterograde axonal long-range transport of presynaptic lysosome-related vesicles required for presynaptic biogenesis and synaptic function. Acts downstream of Rab2 during presynaptic precursor vesicle biogenesis. Essential role in chromosome segregation. This is ADP-ribosylation factor-like protein 8 from Drosophila melanogaster (Fruit fly).